Consider the following 448-residue polypeptide: Tubulin beta chain (448 aa).

GTP contacts are provided by Q11, E69, S138, G142, T143, G144, N204, and N226. E69 serves as a coordination point for Mg(2+). Positions 429–448 are disordered; it reads GIDEGDEDYEIEEEKEPLEY.

Belongs to the tubulin family. Dimer of alpha and beta chains. A typical microtubule is a hollow water-filled tube with an outer diameter of 25 nm and an inner diameter of 15 nM. Alpha-beta heterodimers associate head-to-tail to form protofilaments running lengthwise along the microtubule wall with the beta-tubulin subunit facing the microtubule plus end conferring a structural polarity. Microtubules usually have 13 protofilaments but different protofilament numbers can be found in some organisms and specialized cells. It depends on Mg(2+) as a cofactor.

The protein localises to the cytoplasm. The protein resides in the cytoskeleton. Functionally, tubulin is the major constituent of microtubules, a cylinder consisting of laterally associated linear protofilaments composed of alpha- and beta-tubulin heterodimers. Microtubules grow by the addition of GTP-tubulin dimers to the microtubule end, where a stabilizing cap forms. Below the cap, tubulin dimers are in GDP-bound state, owing to GTPase activity of alpha-tubulin. This chain is Tubulin beta chain (nda3), found in Schizosaccharomyces pombe (strain 972 / ATCC 24843) (Fission yeast).